A 438-amino-acid polypeptide reads, in one-letter code: Enolase (438 aa).

Residue Gln174 coordinates (2R)-2-phosphoglycerate. Glu216 functions as the Proton donor in the catalytic mechanism. Mg(2+)-binding residues include Asp253, Glu297, and Asp324. Positions 349, 378, 379, and 400 each coordinate (2R)-2-phosphoglycerate. Catalysis depends on Lys349, which acts as the Proton acceptor.

It belongs to the enolase family. As to quaternary structure, component of the RNA degradosome, a multiprotein complex involved in RNA processing and mRNA degradation. Mg(2+) is required as a cofactor.

It is found in the cytoplasm. The protein resides in the secreted. The protein localises to the cell surface. The enzyme catalyses (2R)-2-phosphoglycerate = phosphoenolpyruvate + H2O. The protein operates within carbohydrate degradation; glycolysis; pyruvate from D-glyceraldehyde 3-phosphate: step 4/5. Its function is as follows. Catalyzes the reversible conversion of 2-phosphoglycerate (2-PG) into phosphoenolpyruvate (PEP). It is essential for the degradation of carbohydrates via glycolysis. The chain is Enolase from Psychrobacter arcticus (strain DSM 17307 / VKM B-2377 / 273-4).